Here is a 128-residue protein sequence, read N- to C-terminus: Ribonuclease P protein component (128 aa).

It belongs to the RnpA family. As to quaternary structure, consists of a catalytic RNA component (M1 or rnpB) and a protein subunit.

The catalysed reaction is Endonucleolytic cleavage of RNA, removing 5'-extranucleotides from tRNA precursor.. RNaseP catalyzes the removal of the 5'-leader sequence from pre-tRNA to produce the mature 5'-terminus. It can also cleave other RNA substrates such as 4.5S RNA. The protein component plays an auxiliary but essential role in vivo by binding to the 5'-leader sequence and broadening the substrate specificity of the ribozyme. This Mycoplasma genitalium (strain ATCC 33530 / DSM 19775 / NCTC 10195 / G37) (Mycoplasmoides genitalium) protein is Ribonuclease P protein component.